Here is a 626-residue protein sequence, read N- to C-terminus: DNA (cytosine-5)-methyltransferase DRM2 (626 aa).

UBA domains lie at Gly-59–Tyr-101 and Ser-109–Cys-150. A compositionally biased stretch (acidic residues) spans Val-160–Lys-187. Disordered stretches follow at residues Val-160–Ser-196 and Thr-245–Met-282. Residues Asn-190 to Cys-232 form the UBA 3 domain. Basic and acidic residues predominate over residues Glu-262 to Ile-276. Residues Thr-295–Ser-626 form the SAM-dependent MTase DRM-type domain.

This sequence belongs to the class I-like SAM-binding methyltransferase superfamily. DRM-methyltransferase family. Interacts with RDM1. In terms of tissue distribution, expressed in roots, inflorescences and at lower levels in leaves.

It localises to the nucleus. It is found in the nucleoplasm. The enzyme catalyses a 2'-deoxycytidine in DNA + S-adenosyl-L-methionine = a 5-methyl-2'-deoxycytidine in DNA + S-adenosyl-L-homocysteine + H(+). Its function is as follows. Involved in de novo DNA methylation. Controls asymmetric and CpNpG methylation. Required for FWA gene silencing but not for the maintenance of SUP gene silencing. Functionally redundant to CMT3 to maintain non-CpG methylation. Involved in RNA-directed DNA methylation (RdDM). Acts as major DNA methyltransferase in the RdDM pathway, and is essential for RNA-directed de novo DNA methylation of cytosines in all sequence contexts. Associates with long non-coding RNA (lncRNA) produced by RNA polymerase V (Pol V). This association is dependent on AGO4 and IDN2, and results in DNA methylation of RdDM target loci. This is DNA (cytosine-5)-methyltransferase DRM2 (DRM2) from Arabidopsis thaliana (Mouse-ear cress).